A 105-amino-acid polypeptide reads, in one-letter code: Multidrug resistance protein EbrA (105 aa).

A run of 4 helical transmembrane segments spans residues 2 to 22, 35 to 55, 60 to 80, and 87 to 104; these read IAGYIFLLIAILSEAAAAAML, VLVVIGYGLAFYMMSLTLQVI, SYATWSGAGTVLTAIIGVLWF, and RNIAGIICLVSGVVLINL.

It belongs to the drug/metabolite transporter (DMT) superfamily. Small multidrug resistance (SMR) (TC 2.A.7.1) family. EbrA/EbrB subfamily. The efflux pump is composed of EbrA and EbrB.

It localises to the cell membrane. In terms of biological role, part of a multidrug efflux pump. Confers resistance to cationic lipophilic dyes such as ethidium bromide, acriflavine, pyronine Y and safranin O. The efflux is probably coupled to an influx of protons. The chain is Multidrug resistance protein EbrA (ebrA) from Bacillus licheniformis (strain ATCC 14580 / DSM 13 / JCM 2505 / CCUG 7422 / NBRC 12200 / NCIMB 9375 / NCTC 10341 / NRRL NRS-1264 / Gibson 46).